The chain runs to 614 residues: ATP-dependent rRNA helicase SPB4 (614 aa).

Residues 10-38 carry the Q motif motif; sequence WSVLKCDLHPWIKEAIKSLGYPTMTPVQA. The Helicase ATP-binding domain maps to 41 to 233; the sequence is IPLFSGNKDV…RTGMANPVKI (193 aa). Residue 54 to 61 coordinates ATP; the sequence is AVTGSGKT. The DEAD box motif lies at 181-184; it reads DEAD. The region spanning 260 to 431 is the Helicase C-terminal domain; the sequence is KISALIALIK…KFQKKFRKYM (172 aa). Positions 510–581 form a coiled coil; that stretch reads EYADKQKEES…IEKQLMDDSS (72 aa). Positions 514–529 are enriched in basic and acidic residues; it reads KQKEESRKKNLEEDKA. The disordered stretch occupies residues 514-614; sequence KQKEESRKKN…DSMQGSFDDL (101 aa). Residues 530-541 show a composition bias toward basic residues; the sequence is RKVHDAKKRKEL. Basic and acidic residues-rich tracts occupy residues 551–563 and 584–595; these read KTDKIETKQERRE and EETKVDWKEMVK. The span at 604-614 shows a compositional bias: polar residues; the sequence is SDSMQGSFDDL.

The protein belongs to the DEAD box helicase family. DDX55/SPB4 subfamily. As to quaternary structure, component of pre-60S ribosomal complexes.

The protein localises to the nucleus. It is found in the nucleolus. It carries out the reaction ATP + H2O = ADP + phosphate + H(+). In terms of biological role, ATP-binding RNA helicase involved in the biogenesis of 60S ribosomal subunits. Binds 90S pre-ribosomal particles and dissociates from pre-60S ribosomal particles after processing of 27SB pre-rRNA. Required for the normal formation of 18S rRNA through the processing of pre-rRNAs at sites A0, A1 and A2, and the normal formation of 25S and 5.8S rRNAs through the processing of pre-rRNAs at sites C1 and C2. The sequence is that of ATP-dependent rRNA helicase SPB4 from Debaryomyces hansenii (strain ATCC 36239 / CBS 767 / BCRC 21394 / JCM 1990 / NBRC 0083 / IGC 2968) (Yeast).